The primary structure comprises 796 residues: Molybdenum cofactor sulfurase (796 aa).

Lys246 carries the post-translational modification N6-(pyridoxal phosphate)lysine. Residue Cys418 is part of the active site. An MOSC domain is found at 650–796; sequence LRLLRQSSQR…LTCGDVVVVT (147 aa). Ser752 bears the Phosphoserine mark.

This sequence belongs to the class-V pyridoxal-phosphate-dependent aminotransferase family. MOCOS subfamily. It depends on pyridoxal 5'-phosphate as a cofactor.

It carries out the reaction Mo-molybdopterin + L-cysteine + AH2 = thio-Mo-molybdopterin + L-alanine + A + H2O. Functionally, sulfurates the molybdenum cofactor. Sulfation of molybdenum is essential for xanthine dehydrogenase (XDH) and aldehyde oxidase (ADO) enzymes in which molybdenum cofactor is liganded by 1 oxygen and 1 sulfur atom in active form. The chain is Molybdenum cofactor sulfurase from Drosophila persimilis (Fruit fly).